An 89-amino-acid chain; its full sequence is Small ribosomal subunit protein bS20 (89 aa).

The protein belongs to the bacterial ribosomal protein bS20 family.

Binds directly to 16S ribosomal RNA. The sequence is that of Small ribosomal subunit protein bS20 from Wolbachia pipientis wMel.